A 304-amino-acid polypeptide reads, in one-letter code: UDP-3-O-acyl-N-acetylglucosamine deacetylase (304 aa).

Zn(2+) contacts are provided by His79, His238, and Asp242. The active-site Proton donor is His265.

This sequence belongs to the LpxC family. Zn(2+) is required as a cofactor.

The enzyme catalyses a UDP-3-O-[(3R)-3-hydroxyacyl]-N-acetyl-alpha-D-glucosamine + H2O = a UDP-3-O-[(3R)-3-hydroxyacyl]-alpha-D-glucosamine + acetate. It functions in the pathway glycolipid biosynthesis; lipid IV(A) biosynthesis; lipid IV(A) from (3R)-3-hydroxytetradecanoyl-[acyl-carrier-protein] and UDP-N-acetyl-alpha-D-glucosamine: step 2/6. In terms of biological role, catalyzes the hydrolysis of UDP-3-O-myristoyl-N-acetylglucosamine to form UDP-3-O-myristoylglucosamine and acetate, the committed step in lipid A biosynthesis. This is UDP-3-O-acyl-N-acetylglucosamine deacetylase from Photobacterium profundum (strain SS9).